The primary structure comprises 486 residues: Cysteine--tRNA ligase (486 aa).

Residue Cys-27 coordinates Zn(2+). A 'HIGH' region motif is present at residues Pro-29–Asn-39. The Zn(2+) site is built by Cys-207, His-232, and Glu-236. The 'KMSKS' region motif lies at Lys-264–Ser-268. Lys-267 provides a ligand contact to ATP.

It belongs to the class-I aminoacyl-tRNA synthetase family. Monomer. Zn(2+) is required as a cofactor.

It localises to the cytoplasm. The enzyme catalyses tRNA(Cys) + L-cysteine + ATP = L-cysteinyl-tRNA(Cys) + AMP + diphosphate. In Desulforamulus reducens (strain ATCC BAA-1160 / DSM 100696 / MI-1) (Desulfotomaculum reducens), this protein is Cysteine--tRNA ligase.